Reading from the N-terminus, the 386-residue chain is Chaperone protein DnaJ (386 aa).

The J domain occupies 5-70; that stretch reads DYYEVLGVER…QKRAAYDRYG (66 aa). A CR-type zinc finger spans residues 138–216; sequence GKDETIHVPQ…CGGHGQVKEE (79 aa). Zn(2+) contacts are provided by Cys151, Cys154, Cys168, Cys171, Cys190, Cys193, Cys204, and Cys207. 4 CXXCXGXG motif repeats span residues 151-158, 168-175, 190-197, and 204-211; these read CRPCEGTG, CETCGGHG, CHICQGRG, and CKTCGGHG.

It belongs to the DnaJ family. As to quaternary structure, homodimer. Zn(2+) serves as cofactor.

The protein localises to the cytoplasm. Participates actively in the response to hyperosmotic and heat shock by preventing the aggregation of stress-denatured proteins and by disaggregating proteins, also in an autonomous, DnaK-independent fashion. Unfolded proteins bind initially to DnaJ; upon interaction with the DnaJ-bound protein, DnaK hydrolyzes its bound ATP, resulting in the formation of a stable complex. GrpE releases ADP from DnaK; ATP binding to DnaK triggers the release of the substrate protein, thus completing the reaction cycle. Several rounds of ATP-dependent interactions between DnaJ, DnaK and GrpE are required for fully efficient folding. Also involved, together with DnaK and GrpE, in the DNA replication of plasmids through activation of initiation proteins. This Hyphomonas neptunium (strain ATCC 15444) protein is Chaperone protein DnaJ.